Here is a 173-residue protein sequence, read N- to C-terminus: Ferritin, lower subunit (173 aa).

The Ferritin-like diiron domain maps to 7–156; the sequence is QNFHQDCEAG…DHITSLKKLW (150 aa). Fe cation-binding residues include glutamate 59 and histidine 62.

It belongs to the ferritin family. Oligomer of 24 subunits. The functional molecule is roughly spherical and contains a central cavity into which the polymeric mineral iron core is deposited.

Stores iron in a soluble, non-toxic, readily available form. Important for iron homeostasis. Iron is taken up in the ferrous form and deposited as ferric hydroxides after oxidation. The protein is Ferritin, lower subunit of Aquarana catesbeiana (American bullfrog).